Reading from the N-terminus, the 75-residue chain is Mitotic-spindle organizing protein 1 (75 aa).

This sequence belongs to the MOZART1 family. Part of the gamma-tubulin complex.

The protein localises to the cytoplasm. The protein resides in the cytoskeleton. It localises to the microtubule organizing center. It is found in the centrosome. Its subcellular location is the spindle. Required for gamma-tubulin complex recruitment to the centrosome. In Danio rerio (Zebrafish), this protein is Mitotic-spindle organizing protein 1 (mzt1).